Consider the following 793-residue polypeptide: Putative potassium transporter 12 (793 aa).

Over Met1 to Ser54 the chain is Cytoplasmic. Residues Leu55–Pro75 traverse the membrane as a helical segment. The Extracellular segment spans residues His76 to Ala87. The chain crosses the membrane as a helical span at residues Leu88 to Leu108. Residues Arg109–Leu175 are Cytoplasmic-facing. Residues Leu176–Ile196 form a helical membrane-spanning segment. Over Ser197–Asp215 the chain is Extracellular. A helical transmembrane segment spans residues Val216–Thr236. At Asp237–Lys238 the chain is on the cytoplasmic side. The chain crosses the membrane as a helical span at residues Val239–Ala259. Over Leu260–Ser289 the chain is Extracellular. An N-linked (GlcNAc...) asparagine glycan is attached at Asn266. A helical transmembrane segment spans residues Trp290–Leu310. Topologically, residues Cys311–Val315 are cytoplasmic. Residues Leu316 to Ala338 traverse the membrane as a helical segment. At Ala339–Thr359 the chain is on the extracellular side. The helical transmembrane segment at Ile360–Ile380 threads the bilayer. Residues Ser381–Gln411 are Cytoplasmic-facing. A helical transmembrane segment spans residues Ile412 to Phe432. The Extracellular segment spans residues Lys433–Thr444. Asn434 carries an N-linked (GlcNAc...) asparagine glycan. The helical transmembrane segment at Ala445 to Trp465 threads the bilayer. Residues Lys466–His468 lie on the Cytoplasmic side of the membrane. The chain crosses the membrane as a helical span at residues Trp469–Ala489. The Extracellular segment spans residues Cys490–Gln496. The helical transmembrane segment at Gly497 to Phe517 threads the bilayer. Over Cys518–Ile793 the chain is Cytoplasmic.

It belongs to the HAK/KUP transporter (TC 2.A.72.3) family.

It is found in the membrane. Functionally, high-affinity potassium transporter. The protein is Putative potassium transporter 12 (HAK12) of Oryza sativa subsp. japonica (Rice).